The chain runs to 711 residues: Polyribonucleotide nucleotidyltransferase (711 aa).

Aspartate 486 and aspartate 492 together coordinate Mg(2+). Residues proline 553–isoleucine 612 form the KH domain. An S1 motif domain is found at glycine 622 to lysine 690. Residues lysine 690–glutamate 711 form a disordered region. Over residues glutamate 694–glutamate 711 the composition is skewed to low complexity.

Belongs to the polyribonucleotide nucleotidyltransferase family. In terms of assembly, component of the RNA degradosome, which is a multiprotein complex involved in RNA processing and mRNA degradation. It depends on Mg(2+) as a cofactor.

The protein resides in the cytoplasm. The catalysed reaction is RNA(n+1) + phosphate = RNA(n) + a ribonucleoside 5'-diphosphate. In terms of biological role, involved in mRNA degradation. Catalyzes the phosphorolysis of single-stranded polyribonucleotides processively in the 3'- to 5'-direction. The sequence is that of Polyribonucleotide nucleotidyltransferase from Shigella dysenteriae serotype 1 (strain Sd197).